The chain runs to 327 residues: Serine/threonine-protein phosphatase 4 regulatory subunit ppfr-4 (327 aa).

Residues 141–185 adopt a coiled-coil conformation; it reads KLAVEEIRRLKLERHKKKQELKMAELRIQKQLEAVSIDEQNLREL. Positions 271-327 are disordered; the sequence is KFGHNPQNAPQSSAPAGAEAQESEEEVDDDEARAKAMRWDEYKDDHRRGWGNMHNKG. A compositionally biased stretch (polar residues) spans 275–284; it reads NPQNAPQSSA. The segment covering 291 to 301 has biased composition (acidic residues); that stretch reads QESEEEVDDDE. Residues 302–318 are compositionally biased toward basic and acidic residues; it reads ARAKAMRWDEYKDDHRR.

As to quaternary structure, serine/threonine-protein phosphatase 4 (PP4) occurs in different assemblies of the catalytic and one or more regulatory subunits. The catalytic subunit is likely to be pph-4.1.

Probable regulatory subunit of serine/threonine-protein phosphatase PP4 which may play a role in meiosis and embryonic mitosis. Probably in association with catalytic subunit pph-4.1, regulates microtubule severing during oocyte meiosis II by dephosphorylating and likely activating mei-1, a component of the katanin microtubule severing complex. This is Serine/threonine-protein phosphatase 4 regulatory subunit ppfr-4 from Caenorhabditis elegans.